We begin with the raw amino-acid sequence, 410 residues long: Aspartic proteinase Asp1 (410 aa).

The N-terminal stretch at 1 to 23 is a signal peptide; that stretch reads MTARLALLASLLLLLQLVPPSSA. The propeptide at 24–46 is removed in mature form; it reads VVLELHGNVYPIGHFFITMNIGD. The region spanning 38–392 is the Peptidase A1 domain; it reads FFITMNIGDP…DSERSLLGWV (355 aa). Residues Asp-56 and Asp-257 contribute to the active site.

This sequence belongs to the peptidase A1 family.

This chain is Aspartic proteinase Asp1 (ASP1), found in Oryza sativa subsp. japonica (Rice).